The following is a 413-amino-acid chain: Multifunctional CCA protein (413 aa).

Gly8 and Arg11 together coordinate ATP. The CTP site is built by Gly8 and Arg11. Asp21 and Asp23 together coordinate Mg(2+). Residues Arg91, Arg143, and Arg146 each coordinate ATP. Residues Arg91, Arg143, and Arg146 each contribute to the CTP site. The HD domain occupies 232–333; the sequence is TGVHVMMVID…VRLLERADAL (102 aa).

This sequence belongs to the tRNA nucleotidyltransferase/poly(A) polymerase family. Bacterial CCA-adding enzyme type 1 subfamily. Monomer. Can also form homodimers and oligomers. It depends on Mg(2+) as a cofactor. Ni(2+) serves as cofactor.

The catalysed reaction is a tRNA precursor + 2 CTP + ATP = a tRNA with a 3' CCA end + 3 diphosphate. The enzyme catalyses a tRNA with a 3' CCA end + 2 CTP + ATP = a tRNA with a 3' CCACCA end + 3 diphosphate. In terms of biological role, catalyzes the addition and repair of the essential 3'-terminal CCA sequence in tRNAs without using a nucleic acid template. Adds these three nucleotides in the order of C, C, and A to the tRNA nucleotide-73, using CTP and ATP as substrates and producing inorganic pyrophosphate. tRNA 3'-terminal CCA addition is required both for tRNA processing and repair. Also involved in tRNA surveillance by mediating tandem CCA addition to generate a CCACCA at the 3' terminus of unstable tRNAs. While stable tRNAs receive only 3'-terminal CCA, unstable tRNAs are marked with CCACCA and rapidly degraded. This is Multifunctional CCA protein from Burkholderia pseudomallei (strain 668).